A 455-amino-acid chain; its full sequence is Alcohol acyl transferase 1 allele RGb (455 aa).

Active-site proton acceptor residues include His-164 and Asn-385.

This sequence belongs to the plant acyltransferase family.

Functionally, involved in the biosynthesis of volatile esters which confer ripe apple fruit flavor. Alcohol acyl transferase that can use a wide range of alcohols as substrate to produce esters. The chain is Alcohol acyl transferase 1 allele RGb from Malus domestica (Apple).